The primary structure comprises 307 residues: Protein ORANGE, chloroplastic (307 aa).

A chloroplast-targeting transit peptide spans 1-55; it reads MSSLGRILSVSYPPDPYTWRFSQYKLSSSLGRNRRLRWRFTALDPESSSLDSESS. A Glycyl lysine isopeptide (Lys-Gly) (interchain with G-Cter in ubiquitin) cross-link involves residue lysine 58. The next 2 helical transmembrane spans lie at 146 to 166 and 199 to 219; these read VYYA…GLLA and IVAS…VVEV. The tract at residues 208–299 is CR-type-like; sequence VGVISALMVV…CTGMAMASEH (92 aa). The stretch at 230–237 is one CXXCXGXG motif repeat; the sequence is CKYCLGTG. Residues 241 to 248 form a CXXCXXXG motif repeat; it reads CARCSSTG. A CXXCXGXG motif repeat occupies 274-281; that stretch reads CSNCSGAG. The CXXCXXXG motif repeat unit spans residues 285 to 292; that stretch reads CPTCLCTG.

Belongs to the orange-like family. As to quaternary structure, interacts with the phytoene synthase PSY1 in chloroplast. Binds to the eukaryotic release factor eRF1-2. Interacts with the transcription factor TCP14 in the nucleus to repress chloroplast biogenesis in etiolated seedlings. Associates to the E2 ubiquitin-conjugating enzyme UBC19. Post-translationally, ubiquitination at K-58 by UBC19 is essential for nuclear localization.

It localises to the plastid. The protein localises to the chloroplast membrane. Its subcellular location is the nucleus. It is found in the cytoplasm. In terms of biological role, involved in chromoplast differentiation. Associated with a cellular process that triggers the differentiation of pro-plastids or other non-colored plastids into chromoplasts for carotenoid accumulation. Is associated with carotenoid accumulation in chromoplasts. Functions as a major regulator of the phytoene synthase PSY1 protein level and activity. Modulates carotenoid biosynthesis by means of post-transcriptional regulation of PSY1. Modulates carotenoid biosynthesis in part by up-regulating a series of endogenous carotenogenic genes. Regulates cell elongation in the petiole in an eRF1-2-dependent manner. Binds to and represses TCP14 transactivation activity, thus preventing early light-induced proteins (ELIPs, e.g. ELIP1 and ELIP2) expression and delaying chloroplast biogenesis (e.g. lower chlorophyll biosynthesis and slower development of thylakoid membranes) in germinating cotyledons and etiolated seedlings; reduced levels upon illumination combined to TCP14 accumulation derepress chloroplast biogenesis during deetiolation. The chain is Protein ORANGE, chloroplastic from Arabidopsis thaliana (Mouse-ear cress).